We begin with the raw amino-acid sequence, 497 residues long: Guanosine-5'-triphosphate,3'-diphosphate pyrophosphatase (497 aa).

It belongs to the GppA/Ppx family. GppA subfamily.

It catalyses the reaction guanosine 3'-diphosphate 5'-triphosphate + H2O = guanosine 3',5'-bis(diphosphate) + phosphate + H(+). The protein operates within purine metabolism; ppGpp biosynthesis; ppGpp from GTP: step 2/2. Its function is as follows. Catalyzes the conversion of pppGpp to ppGpp. Guanosine pentaphosphate (pppGpp) is a cytoplasmic signaling molecule which together with ppGpp controls the 'stringent response', an adaptive process that allows bacteria to respond to amino acid starvation, resulting in the coordinated regulation of numerous cellular activities. This Vibrio campbellii (strain ATCC BAA-1116) protein is Guanosine-5'-triphosphate,3'-diphosphate pyrophosphatase.